Here is a 101-residue protein sequence, read N- to C-terminus: Large ribosomal subunit protein uL24c (101 aa).

This sequence belongs to the universal ribosomal protein uL24 family. In terms of assembly, part of the 50S ribosomal subunit.

It localises to the plastid. The protein resides in the chloroplast. Functionally, one of two assembly initiator proteins, it binds directly to the 5'-end of the 23S rRNA, where it nucleates assembly of the 50S subunit. This Guillardia theta (Cryptophyte) protein is Large ribosomal subunit protein uL24c (rpl24).